The following is a 661-amino-acid chain: Heme transporter BhuA (661 aa).

The N-terminal stretch at 1–23 (MKFTRTLVLASTFLLATVATSQA) is a signal peptide. A TBDR plug domain is found at 48 to 159 (KDNIEATGGT…AAGAIRYETV (112 aa)). The TBDR beta-barrel domain occupies 170-661 (TFGARIIGSY…TFTFQTAFKF (492 aa)).

It belongs to the TonB-dependent receptor family.

It is found in the cell outer membrane. Its function is as follows. Heme transporter. This chain is Heme transporter BhuA (bhuA), found in Brucella suis biovar 1 (strain 1330).